Reading from the N-terminus, the 257-residue chain is 2,3,4,5-tetrahydropyridine-2,6-dicarboxylate N-acetyltransferase (257 aa).

This sequence belongs to the transferase hexapeptide repeat family. DapH subfamily.

The catalysed reaction is (S)-2,3,4,5-tetrahydrodipicolinate + acetyl-CoA + H2O = L-2-acetamido-6-oxoheptanedioate + CoA. The protein operates within amino-acid biosynthesis; L-lysine biosynthesis via DAP pathway; LL-2,6-diaminopimelate from (S)-tetrahydrodipicolinate (acetylase route): step 1/3. In terms of biological role, catalyzes the transfer of an acetyl group from acetyl-CoA to tetrahydrodipicolinate. This Lactococcus lactis subsp. cremoris (strain SK11) protein is 2,3,4,5-tetrahydropyridine-2,6-dicarboxylate N-acetyltransferase.